The primary structure comprises 223 residues: 2-C-methyl-D-erythritol 4-phosphate cytidylyltransferase (223 aa).

The protein belongs to the IspD/TarI cytidylyltransferase family. IspD subfamily.

It carries out the reaction 2-C-methyl-D-erythritol 4-phosphate + CTP + H(+) = 4-CDP-2-C-methyl-D-erythritol + diphosphate. It participates in isoprenoid biosynthesis; isopentenyl diphosphate biosynthesis via DXP pathway; isopentenyl diphosphate from 1-deoxy-D-xylulose 5-phosphate: step 2/6. In terms of biological role, catalyzes the formation of 4-diphosphocytidyl-2-C-methyl-D-erythritol from CTP and 2-C-methyl-D-erythritol 4-phosphate (MEP). This is 2-C-methyl-D-erythritol 4-phosphate cytidylyltransferase from Prochlorococcus marinus (strain MIT 9515).